Here is a 249-residue protein sequence, read N- to C-terminus: 3-deoxy-manno-octulosonate cytidylyltransferase (249 aa).

Belongs to the KdsB family.

The protein resides in the cytoplasm. It carries out the reaction 3-deoxy-alpha-D-manno-oct-2-ulosonate + CTP = CMP-3-deoxy-beta-D-manno-octulosonate + diphosphate. The protein operates within nucleotide-sugar biosynthesis; CMP-3-deoxy-D-manno-octulosonate biosynthesis; CMP-3-deoxy-D-manno-octulosonate from 3-deoxy-D-manno-octulosonate and CTP: step 1/1. It participates in bacterial outer membrane biogenesis; lipopolysaccharide biosynthesis. Functionally, activates KDO (a required 8-carbon sugar) for incorporation into bacterial lipopolysaccharide in Gram-negative bacteria. The chain is 3-deoxy-manno-octulosonate cytidylyltransferase from Brucella anthropi (strain ATCC 49188 / DSM 6882 / CCUG 24695 / JCM 21032 / LMG 3331 / NBRC 15819 / NCTC 12168 / Alc 37) (Ochrobactrum anthropi).